A 263-amino-acid chain; its full sequence is tRNA (guanine-N(7)-)-methyltransferase (263 aa).

The tract at residues 1–33 is disordered; it reads MSDHGRMHSTGSEVAAPVAPDPDTEGVHPHFNR. Residues Glu89, Glu114, Asp146, and Asp169 each contribute to the S-adenosyl-L-methionine site. Residue Asp169 is part of the active site. Residues Lys173, Asp205, and 242-245 contribute to the substrate site; that span reads TKYE.

The protein belongs to the class I-like SAM-binding methyltransferase superfamily. TrmB family.

It carries out the reaction guanosine(46) in tRNA + S-adenosyl-L-methionine = N(7)-methylguanosine(46) in tRNA + S-adenosyl-L-homocysteine. It participates in tRNA modification; N(7)-methylguanine-tRNA biosynthesis. Its function is as follows. Catalyzes the formation of N(7)-methylguanine at position 46 (m7G46) in tRNA. This chain is tRNA (guanine-N(7)-)-methyltransferase, found in Mycolicibacterium gilvum (strain PYR-GCK) (Mycobacterium gilvum (strain PYR-GCK)).